The chain runs to 183 residues: MNKLANQHLIWIDLEMTGLDPNQDRIIEIATIVTDKDLNILAKGPVLAVHQPNTLLSKMNEWCIKTHTANGLIERVKQSKLTERAAELQTLDFLKQWVMKGSSPICGNSVAQDKRFLYQYMPDLADYFHYRHLDVSTLKELARRWKPEILQQFSKKNSHLALDDIRESIEELKFYREHFIKLA.

Positions 9–172 constitute an Exonuclease domain; that stretch reads LIWIDLEMTG…DDIRESIEEL (164 aa). Tyr130 is a catalytic residue.

Belongs to the oligoribonuclease family.

It localises to the cytoplasm. Functionally, 3'-to-5' exoribonuclease specific for small oligoribonucleotides. The polypeptide is Oligoribonuclease (Haemophilus ducreyi (strain 35000HP / ATCC 700724)).